Reading from the N-terminus, the 201-residue chain is Peptidyl-tRNA hydrolase (201 aa).

Tyrosine 14 serves as a coordination point for tRNA. Residue histidine 19 is the Proton acceptor of the active site. Tyrosine 64, asparagine 66, and asparagine 112 together coordinate tRNA.

Belongs to the PTH family. As to quaternary structure, monomer.

The protein localises to the cytoplasm. The catalysed reaction is an N-acyl-L-alpha-aminoacyl-tRNA + H2O = an N-acyl-L-amino acid + a tRNA + H(+). In terms of biological role, hydrolyzes ribosome-free peptidyl-tRNAs (with 1 or more amino acids incorporated), which drop off the ribosome during protein synthesis, or as a result of ribosome stalling. Functionally, catalyzes the release of premature peptidyl moieties from peptidyl-tRNA molecules trapped in stalled 50S ribosomal subunits, and thus maintains levels of free tRNAs and 50S ribosomes. The chain is Peptidyl-tRNA hydrolase from Bradyrhizobium sp. (strain ORS 278).